The primary structure comprises 578 residues: MESEQRRKRKRIYKPDSTSNSFFSVRSLTACLSFFVFLLFISSDRSPIKTVSFRPVLNVPVSLLPTPLGLTRDSFDTKSLPLIVEDRVLLPDHVLLIVSNKVATSQNLDCVYSNLYNSHDVVLKPALSVNQYHRDKSIVRCQLPPNNYSAAVYLRWSWEAAEGVAAAAPASVVSWDRVVYEAMLDWNTVAVFVKGLNLRPHKESDSSKFRCHFGLSKFDKDEGIVFTTEAITAAQEVIRCLLPRSIRNNPVKAQGIRVTVSRINAGEDGVDAPLPSVAKVYGAKSYEKRSNRGKYELCACTMLWNQASFLHEWITYHAWLGVQRWFIYDNNSDDGIQEVVDELNLQNYNVTRHSWPWIKAQEAGFSHCALRARSECKWLGFFDVDEFFYLPRHRGQDMLGENSLRTLVANYSDSSTYAEIRTICHSFGPSGLTSAPSQGVTVGYTCRLQAPERHKSIVRPELLDTTLLNVVHHFKLKEGYRYLNVPESTAVVNHYKYQVWDTFKAKFFRRVSTYVANWQEDQNQGSKDRAPGLGTVAIEPPDWRLRFCEVWDTGLKDFVLANFADTASGYLPWERSPF.

Residues 21–43 (SFFSVRSLTACLSFFVFLLFISS) form a helical membrane-spanning segment. Residues 295–531 (YELCACTMLW…QNQGSKDRAP (237 aa)) enclose the GT92 domain.

Belongs to the glycosyltransferase 92 family.

It localises to the membrane. This is Glycosyltransferase family 92 protein RCOM_0530710 from Ricinus communis (Castor bean).